A 356-amino-acid chain; its full sequence is UDP-N-acetylglucosamine--N-acetylmuramyl-(pentapeptide) pyrophosphoryl-undecaprenol N-acetylglucosamine transferase (356 aa).

UDP-N-acetyl-alpha-D-glucosamine contacts are provided by residues Thr15–Gly17, Asn127, Arg163, Ser191, Ile244, Ala263–Glu268, and Gln288.

It belongs to the glycosyltransferase 28 family. MurG subfamily.

Its subcellular location is the cell inner membrane. It catalyses the reaction di-trans,octa-cis-undecaprenyl diphospho-N-acetyl-alpha-D-muramoyl-L-alanyl-D-glutamyl-meso-2,6-diaminopimeloyl-D-alanyl-D-alanine + UDP-N-acetyl-alpha-D-glucosamine = di-trans,octa-cis-undecaprenyl diphospho-[N-acetyl-alpha-D-glucosaminyl-(1-&gt;4)]-N-acetyl-alpha-D-muramoyl-L-alanyl-D-glutamyl-meso-2,6-diaminopimeloyl-D-alanyl-D-alanine + UDP + H(+). The protein operates within cell wall biogenesis; peptidoglycan biosynthesis. In terms of biological role, cell wall formation. Catalyzes the transfer of a GlcNAc subunit on undecaprenyl-pyrophosphoryl-MurNAc-pentapeptide (lipid intermediate I) to form undecaprenyl-pyrophosphoryl-MurNAc-(pentapeptide)GlcNAc (lipid intermediate II). The polypeptide is UDP-N-acetylglucosamine--N-acetylmuramyl-(pentapeptide) pyrophosphoryl-undecaprenol N-acetylglucosamine transferase (Yersinia pseudotuberculosis serotype O:1b (strain IP 31758)).